We begin with the raw amino-acid sequence, 372 residues long: 4-hydroxy-3-methylbut-2-en-1-yl diphosphate synthase (flavodoxin) (372 aa).

[4Fe-4S] cluster-binding residues include C270, C273, C305, and E312.

Belongs to the IspG family. It depends on [4Fe-4S] cluster as a cofactor.

It catalyses the reaction (2E)-4-hydroxy-3-methylbut-2-enyl diphosphate + oxidized [flavodoxin] + H2O + 2 H(+) = 2-C-methyl-D-erythritol 2,4-cyclic diphosphate + reduced [flavodoxin]. It participates in isoprenoid biosynthesis; isopentenyl diphosphate biosynthesis via DXP pathway; isopentenyl diphosphate from 1-deoxy-D-xylulose 5-phosphate: step 5/6. Functionally, converts 2C-methyl-D-erythritol 2,4-cyclodiphosphate (ME-2,4cPP) into 1-hydroxy-2-methyl-2-(E)-butenyl 4-diphosphate. The sequence is that of 4-hydroxy-3-methylbut-2-en-1-yl diphosphate synthase (flavodoxin) from Citrobacter koseri (strain ATCC BAA-895 / CDC 4225-83 / SGSC4696).